Here is a 143-residue protein sequence, read N- to C-terminus: Hemoglobin subunit alpha-2 (143 aa).

Ser2 is subject to N-acetylserine. The Globin domain maps to 2–143; sequence SLSTKDKDTV…LARALSEKYR (142 aa). Positions 60 and 89 each coordinate heme b.

The protein belongs to the globin family. In terms of assembly, hb 2 is a heterotetramer of two alpha-2 and two beta chains. Red blood cells.

Involved in oxygen transport from gills to the various peripheral tissues. The chain is Hemoglobin subunit alpha-2 from Cottoperca gobio (Frogmouth).